The chain runs to 726 residues: Catalase-peroxidase (726 aa).

The tract at residues Met-1 to Thr-33 is disordered. The segment at residues Trp-105–Tyr-226 is a cross-link (tryptophyl-tyrosyl-methioninium (Trp-Tyr) (with M-252)). His-106 acts as the Proton acceptor in catalysis. A cross-link (tryptophyl-tyrosyl-methioninium (Tyr-Met) (with W-105)) is located at residues Tyr-226–Met-252. Residue His-267 participates in heme b binding.

This sequence belongs to the peroxidase family. Peroxidase/catalase subfamily. Homodimer or homotetramer. Requires heme b as cofactor. Formation of the three residue Trp-Tyr-Met cross-link is important for the catalase, but not the peroxidase activity of the enzyme.

It carries out the reaction H2O2 + AH2 = A + 2 H2O. The catalysed reaction is 2 H2O2 = O2 + 2 H2O. In terms of biological role, bifunctional enzyme with both catalase and broad-spectrum peroxidase activity. The polypeptide is Catalase-peroxidase (Shigella flexneri).